We begin with the raw amino-acid sequence, 268 residues long: Interleukin-1 beta (268 aa).

The propeptide occupies 1–115; it reads MAAVPDTSDM…DNWDEGYVCD (115 aa).

This sequence belongs to the IL-1 family. As to quaternary structure, monomer. In its precursor form, weakly interacts with full-length MEFV; the mature cytokine does not interact at all. Interacts with integrins ITGAV:ITGBV and ITGA5:ITGB1; integrin-binding is required for IL1B signaling. Interacts with cargo receptor TMED10; the interaction is direct and is required for the secretion of IL1B mature form. Interacts with HSP90AB1; the interaction facilitates cargo translocation into the ERGIC. Interacts with HSP90B1; the interaction facilitates cargo translocation into the ERGIC.

The protein resides in the cytoplasm. It is found in the cytosol. The protein localises to the secreted. It localises to the lysosome. Its subcellular location is the extracellular exosome. In terms of biological role, potent pro-inflammatory cytokine. Initially discovered as the major endogenous pyrogen, induces prostaglandin synthesis, neutrophil influx and activation, T-cell activation and cytokine production, B-cell activation and antibody production, and fibroblast proliferation and collagen production. Promotes Th17 differentiation of T-cells. Synergizes with IL12/interleukin-12 to induce IFNG synthesis from T-helper 1 (Th1) cells. Plays a role in angiogenesis by inducing VEGF production synergistically with TNF and IL6. Involved in transduction of inflammation downstream of pyroptosis: its mature form is specifically released in the extracellular milieu by passing through the gasdermin-D (GSDMD) pore. The chain is Interleukin-1 beta (IL1B) from Equus caballus (Horse).